Reading from the N-terminus, the 285-residue chain is Undecaprenyl-diphosphatase (285 aa).

Transmembrane regions (helical) follow at residues 3–23 (ILLLVKAAIMGIVEGLTEFLP), 41–61 (GEIVKVFDIAIQTGAMFAVIW), 87–107 (LLIAFVPAVISGLALGGLIKE), 109–129 (LFHPVPVATAFVVGGLIILWV), 197–217 (TEFSFFLGIPTLMGAGAYSLI), 226–246 (GDLPVFAVGVVFAFLSALVCI), and 260–280 (VFAWYRIAFGGLVLLSAWGGW).

It belongs to the UppP family.

The protein resides in the cell inner membrane. It carries out the reaction di-trans,octa-cis-undecaprenyl diphosphate + H2O = di-trans,octa-cis-undecaprenyl phosphate + phosphate + H(+). Catalyzes the dephosphorylation of undecaprenyl diphosphate (UPP). Confers resistance to bacitracin. This chain is Undecaprenyl-diphosphatase, found in Methylibium petroleiphilum (strain ATCC BAA-1232 / LMG 22953 / PM1).